We begin with the raw amino-acid sequence, 678 residues long: MSLSNNQTQFVTVFVPIQLSIDVFRKMNNINSFVNDNLTNFPIVTVDQLIKVVNNNNNNNNNNNNNNNNNNNNTSISNNGDINNCLATFEQVQNNCFETCDFKATEREHYFASGKQIQESVLPEEEEEKISVNNFAMVTVEPNNCFVKAQQINSVAPLSLDNRNCVRRAHREVNTFVQVFDVCVFNLKVVNVATNESQVNLFNGGNVENICFDRSIQMPRSSADDFDWSSQQQSSWYSLALSIIPIYHEIILVLCNWLVVAFYKYWQHQQQKQLPPHPLNIIVPNVSKRIAVNLNNQLISLTFTNFLKNIFFLNNNNNNNNNNNNNNNNNNNNNNNNNNNNKTNNNQLNLSKEICNENLNFEEFNFEDESVCKYNRLTNSCENISKIQQVNEESELLDWFSDFEEMDSVLLQNGTEFDNDHPMVKSQAPSITFKSLDQFIKYLEENNCVDDIEVSPCSKSHTFNRPVSTPRLIIKPTWCVYGDSLNTEFFHSCLKDKTCGDIIVDHFEPLVSSPTDFLLSNGGQRILDTPNAGGSSVWSEVLSFEVLNQVFGAQLKKTETEIEYAPGSKITDFSVDINNSHIGVSVVRIINFFDLNGRTYKAVFTPEYARNLLYKKLFGVIASTEAVVDKWEKQILYVWTTSSCVADIIVQEYWKVPAKLRSNTLVYVNHATNSEFLF.

Positions 55–73 (NNNNNNNNNNNNNNNNNNN) are enriched in low complexity. Residues 55 to 75 (NNNNNNNNNNNNNNNNNNNTS) are disordered. The helical transmembrane segment at 243-263 (IIPIYHEIILVLCNWLVVAFY) threads the bilayer. The segment covering 318–346 (NNNNNNNNNNNNNNNNNNNNNNNNKTNNN) has biased composition (low complexity). Positions 318 to 347 (NNNNNNNNNNNNNNNNNNNNNNNNKTNNNQ) are disordered.

It localises to the membrane. The chain is AAC-rich mRNA clone AAC4 protein (AAC4) from Dictyostelium discoideum (Social amoeba).